A 498-amino-acid polypeptide reads, in one-letter code: Phosphatidylserine synthase (498 aa).

Residues 1 to 65 (MKKRTNSRGT…GSVSSAGARR (65 aa)) form a disordered region. The Cytoplasmic segment spans residues 1 to 92 (MKKRTNSRGT…VDDISLDFFY (92 aa)). Residues 7–25 (SRGTPTSSGDALLDTSFSS) are compositionally biased toward polar residues. Residues 93 to 113 (KPHTITLLAVSVLAVMYFAFV) traverse the membrane as a helical segment. Residues 114 to 122 (RNEANVDEN) lie on the Lumenal side of the membrane. A helical transmembrane segment spans residues 123-143 (LWAGLLCIVFFFLIVSVIAFP). At 144 to 153 (NGPFTRPHPA) the chain is on the cytoplasmic side. A helical membrane pass occupies residues 154–174 (VWRILFGCSVLYLLTLQFLMF). Topologically, residues 175–239 (QNYPTIRSIF…AFKAILIRHM (65 aa)) are lumenal. Asn205 is a glycosylation site (N-linked (GlcNAc...) asparagine). The helical transmembrane segment at 240-260 (GILWAISVMWEITEITFAHLL) threads the bilayer. At 261–266 (PNFIEC) the chain is on the cytoplasmic side. The chain crosses the membrane as a helical span at residues 267 to 287 (WWDALILDVIICNGLGIWMGL). Residues 288-339 (KICQILEMREYKWASIKDISTTTGKIKRAMLQFTPESWSAIRWLDPKSTAMR) lie on the Lumenal side of the membrane. Residues 340 to 360 (FAAVIQLVIFWQVTELNTFFL) form a helical membrane-spanning segment. Topologically, residues 361 to 367 (KHIFEMP) are cytoplasmic. A helical membrane pass occupies residues 368–388 (PDHFIVIGRLIFIGLFVAPSV). Topologically, residues 389-402 (RQYYVYVTDTRCKR) are lumenal. The helical transmembrane segment at 403 to 423 (VGTQCWVYGAIMVSEAILCIK) threads the bilayer. Topologically, residues 424 to 436 (NGKELFERTQAIN) are cytoplasmic. The chain crosses the membrane as a helical span at residues 437–457 (IVLWLTVQVIISVAFVYLAVY). The Lumenal portion of the chain corresponds to 458–498 (WQQRQLKKVSSTPAKTKETIPASSSSPSKGKLSPQKEKKLK). Residues 465-498 (KVSSTPAKTKETIPASSSSPSKGKLSPQKEKKLK) form a disordered region. Positions 478-490 (PASSSSPSKGKLS) are enriched in low complexity.

This sequence belongs to the phosphatidyl serine synthase family.

It is found in the endoplasmic reticulum membrane. It catalyses the reaction a 1,2-diacyl-sn-glycero-3-phosphoethanolamine + L-serine = a 1,2-diacyl-sn-glycero-3-phospho-L-serine + ethanolamine. It functions in the pathway phospholipid metabolism; phosphatidylserine biosynthesis. In terms of biological role, catalyzes a base-exchange reaction in which the polar head group of phosphatidylethanolamine (PE) is replaced by L-serine. The polypeptide is Phosphatidylserine synthase (Drosophila melanogaster (Fruit fly)).